We begin with the raw amino-acid sequence, 187 residues long: Large ribosomal subunit protein uL5 (187 aa).

This sequence belongs to the universal ribosomal protein uL5 family. Part of the 50S ribosomal subunit; part of the 5S rRNA/L5/L18/L25 subcomplex. Contacts the 5S rRNA and the P site tRNA. Forms a bridge to the 30S subunit in the 70S ribosome.

Functionally, this is one of the proteins that bind and probably mediate the attachment of the 5S RNA into the large ribosomal subunit, where it forms part of the central protuberance. In the 70S ribosome it contacts protein S13 of the 30S subunit (bridge B1b), connecting the 2 subunits; this bridge is implicated in subunit movement. Contacts the P site tRNA; the 5S rRNA and some of its associated proteins might help stabilize positioning of ribosome-bound tRNAs. The polypeptide is Large ribosomal subunit protein uL5 (Ruegeria sp. (strain TM1040) (Silicibacter sp.)).